A 137-amino-acid chain; its full sequence is Putative pre-16S rRNA nuclease (137 aa).

It belongs to the YqgF nuclease family.

It is found in the cytoplasm. In terms of biological role, could be a nuclease involved in processing of the 5'-end of pre-16S rRNA. The chain is Putative pre-16S rRNA nuclease from Buchnera aphidicola subsp. Schizaphis graminum (strain Sg).